We begin with the raw amino-acid sequence, 601 residues long: 66 kDa stress protein (601 aa).

WD repeat units lie at residues 56-95 (EHAQ…HPLK), 100-143 (VLSG…GEIT), 145-184 (HSKA…FKHA), 187-226 (EHTR…KVGA), 233-272 (AHAL…LTTF), 318-357 (GHNK…AVPI), 435-478 (ASTT…LSEQ), 483-522 (GHRG…IKVE), 526-565 (YHNA…KHIA), and 569-600 (AHRG…WTIK).

This sequence belongs to the WD repeat AIP1 family.

Functionally, associated with the process of cyst formation. The polypeptide is 66 kDa stress protein (Physarum polycephalum (Slime mold)).